Here is a 66-residue protein sequence, read N- to C-terminus: Large ribosomal subunit protein bL28 (66 aa).

This sequence belongs to the bacterial ribosomal protein bL28 family.

This is Large ribosomal subunit protein bL28 from Oenococcus oeni (strain ATCC BAA-331 / PSU-1).